Reading from the N-terminus, the 360-residue chain is DNA replication and repair protein RecF (360 aa).

Gly33–Thr40 serves as a coordination point for ATP.

Belongs to the RecF family.

It is found in the cytoplasm. Functionally, the RecF protein is involved in DNA metabolism; it is required for DNA replication and normal SOS inducibility. RecF binds preferentially to single-stranded, linear DNA. It also seems to bind ATP. The chain is DNA replication and repair protein RecF from Rickettsia massiliae (strain Mtu5).